Reading from the N-terminus, the 1639-residue chain is Merozoite surface protein 1 (1639 aa).

The first 19 residues, 1–19, serve as a signal peptide directing secretion; the sequence is MKIIFFLCSFLFFIINTQC. Polar residues-rich tracts occupy residues 58–67 and 107–119; these read SGTAVTTSTP and NSRRTNPSDNSSD. 2 disordered regions span residues 58 to 78 and 94 to 122; these read SGTAVTTSTPGSKGSVASGGS and VASGGSVASGGSGNSRRTNPSDNSSDSDA. N-linked (GlcNAc...) asparagine glycosylation is found at Asn-116 and Asn-268. Residues 689–764 are disordered; sequence KKNIKTEGQS…VPTPPAPVNN (76 aa). 2 stretches are compositionally biased toward polar residues: residues 694 to 704 and 711 to 722; these read TEGQSDNSEPS and GQATTKPGQQAG. Low complexity predominate over residues 730-741; the sequence is VQAQAQEQKQAQ. N-linked (GlcNAc...) asparagine glycosylation is found at Asn-764, Asn-768, Asn-783, and Asn-844. The segment at 893–915 is disordered; it reads SMQPLSLTPQDKPEVSANDDTSH. N-linked (GlcNAc...) asparagine glycans are attached at residues Asn-920, Asn-964, Asn-1058, Asn-1165, and Asn-1174. A required for binding to host erythrocyte cell membrane region spans residues 1002–1116; sequence QLSFDLYNKY…EESIQTEDNY (115 aa). Positions 1199-1212 are enriched in polar residues; the sequence is VSESGSDTLEQSQP. A disordered region spans residues 1199–1229; the sequence is VSESGSDTLEQSQPKKPASTHVGAESNTITT. N-linked (GlcNAc...) asparagine glycosylation is found at Asn-1445 and Asn-1526. 2 consecutive EGF-like domains span residues 1530 to 1570 and 1571 to 1618; these read HQCV…VENP and NPTC…IFCS. Cystine bridges form between Cys-1532-Cys-1543, Cys-1537-Cys-1553, Cys-1555-Cys-1566, Cys-1574-Cys-1587, Cys-1581-Cys-1601, and Cys-1603-Cys-1617. Ser-1618 carries GPI-anchor amidated serine lipidation. A propeptide spans 1619–1639 (removed in mature form); that stretch reads SSNFLGISFLLILMLILYSFI.

In terms of assembly, forms a complex composed of subunits p83, p30, p38, and p42 which remain non-covalently associated; the complex is formed at the merozoite surface prior to egress from host erythrocytes. Forms a complex composed of processed MSP1 subunits, MSP6 subunit p36 and MSP7; the complex is formed at the merozoite surface prior to egress from host erythrocytes. Within the complex, interacts (via subunit p38) with MSP6 subunit p36 and (via subunits p83, p30 and p38) with MSP7 (via subunit p22). Forms a complex composed of MSP1, MSP6, DBLMSP1 and DBLMSP2. Within the complex, interacts (via subunit p38) with DBLMSP1 and DBLMSP2. Forms a complex composed of MSP1, and rhoptry proteins RhopH3, RAP1 and CLAG9/RhopH3. Within the complex, interacts (via subunits p42 and p19) with RhopH3 (via C-terminus). Forms a complex composed of MSP1, MSP6, MSP7, MSP9 and MSP3; within the complex, MSP6 and MSP9 mediate the binding to the host erythrocyte. Interacts (via subunits p19 and p42) with MSP9; the interaction is direct; MSP1 subunits p19 or p42, and MSP9 form a co-ligand complex that interacts with host SLC4A1/Band 3 protein. May interact with PFD6. Interacts with host spectrin. As to quaternary structure, interacts with host glycophorin GYPA in a sialic acid-independent manner. Interacts with host proinflammatory cytokine S100P; the interaction blocks S100P inflammatory and chemotactic activities. In terms of assembly, interacts with host SLC4A1/Band 3 (via 5ABC region) on the host erythrocyte surface in a sialic acid-independent manner. The p190 precursor is cleaved by SUB1 prior to merozoite egress into 4 subunits p83, p30, p38, and p42 which remain non-covalently associated. SUB1-mediated proteolytic cleavage occurs in an orderly manner; the first cleavage occurs at the p83/p30 site, followed by cleavage at the p30/p38 site, the last cleavage occurs at the p38/p42 site. The order of cleavage is essential for parasite viability. SUB1-mediated processing is essential for merozoite egress. In a second processing step during erythrocyte invasion, p42 is cleaved by SUB2 into p33 and p19; the latter remains attached to the merozoite surface via its GPI-anchor and stays on the surface during the subsequent ring stage.

The protein resides in the cell membrane. Its subcellular location is the secreted. It localises to the vacuole membrane. Functionally, during the asexual blood stage, involved in merozoite egress from host erythrocytes possibly via its interaction with the host cytoskeleton protein spectrin resulting in the destabilization of the host cytoskeleton and thus leading to erythrocyte cell membrane rupture. Involved in the binding to host erythrocytes and is required for host erythrocyte invasion. Its function is as follows. By binding to host proinflammatory cytokine S100P may interfere with host immune responses. In terms of biological role, involved in merozoite invasion of host erythrocytes. May play a role in the biogenesis and/or function of the food vacuole during the intraerythrocytic development. The polypeptide is Merozoite surface protein 1 (Plasmodium falciparum (isolate Wellcome)).